Here is a 410-residue protein sequence, read N- to C-terminus: Elongation factor Tu, chloroplastic (410 aa).

Residues 10 to 215 form the tr-type G domain; that stretch reads KPHVNIGTIG…AVDQYIPTPK (206 aa). The interval 19 to 26 is G1; it reads GHVDHGKT. Position 19-26 (19-26) interacts with GTP; that stretch reads GHVDHGKT. Residue threonine 26 participates in Mg(2+) binding. A G2 region spans residues 61–65; the sequence is GITIN. Residues 82–85 form a G3 region; sequence DCPG. Residues 82 to 86 and 137 to 140 contribute to the GTP site; these read DCPGH and NKQD. Residues 137–140 form a G4 region; that stretch reads NKQD. A G5 region spans residues 175–177; that stretch reads SAL.

The protein belongs to the TRAFAC class translation factor GTPase superfamily. Classic translation factor GTPase family. EF-Tu/EF-1A subfamily.

The protein resides in the plastid. It localises to the chloroplast. It catalyses the reaction GTP + H2O = GDP + phosphate + H(+). Functionally, GTP hydrolase that promotes the GTP-dependent binding of aminoacyl-tRNA to the A-site of ribosomes during protein biosynthesis. The polypeptide is Elongation factor Tu, chloroplastic (tufA) (Nephroselmis olivacea (Green alga)).